Consider the following 229-residue polypeptide: 7-cyano-7-deazaguanine synthase (229 aa).

15–25 (LSGGLDSATVV) is a binding site for ATP. Cys-194, Cys-204, Cys-207, and Cys-210 together coordinate Zn(2+).

It belongs to the QueC family. Zn(2+) serves as cofactor.

It catalyses the reaction 7-carboxy-7-deazaguanine + NH4(+) + ATP = 7-cyano-7-deazaguanine + ADP + phosphate + H2O + H(+). It participates in purine metabolism; 7-cyano-7-deazaguanine biosynthesis. Functionally, catalyzes the ATP-dependent conversion of 7-carboxy-7-deazaguanine (CDG) to 7-cyano-7-deazaguanine (preQ(0)). The chain is 7-cyano-7-deazaguanine synthase from Pseudomonas savastanoi pv. phaseolicola (strain 1448A / Race 6) (Pseudomonas syringae pv. phaseolicola (strain 1448A / Race 6)).